The chain runs to 323 residues: Ubiquinone biosynthesis protein COQ4, mitochondrial (323 aa).

Zn(2+)-binding residues include H209, D210, H213, and E225.

It belongs to the COQ4 family. Component of a multi-subunit COQ enzyme complex, composed of at least COQ3, COQ4, COQ5, COQ6, COQ7 and COQ9. The cofactor is Zn(2+).

It is found in the mitochondrion inner membrane. The catalysed reaction is a 4-hydroxy-3-methoxy-5-(all-trans-polyprenyl)benzoate + H(+) = a 2-methoxy-6-(all-trans-polyprenyl)phenol + CO2. The protein operates within cofactor biosynthesis; ubiquinone biosynthesis. In terms of biological role, lyase that catalyzes the C1-decarboxylation of 4-hydroxy-3-methoxy-5-(all-trans-polyprenyl)benzoic acid into 2-methoxy-6-(all-trans-polyprenyl)phenol during ubiquinone biosynthesis. The sequence is that of Ubiquinone biosynthesis protein COQ4, mitochondrial from Debaryomyces hansenii (strain ATCC 36239 / CBS 767 / BCRC 21394 / JCM 1990 / NBRC 0083 / IGC 2968) (Yeast).